Consider the following 423-residue polypeptide: Phytoene synthase, chloroplastic (423 aa).

A chloroplast-targeting transit peptide spans 1–136; that stretch reads MVVAILRVVS…DAYDRCGEVC (136 aa).

This sequence belongs to the phytoene/squalene synthase family. As to quaternary structure, monomer.

The protein localises to the plastid. It localises to the chloroplast. It carries out the reaction 2 (2E,6E,10E)-geranylgeranyl diphosphate = 15-cis-phytoene + 2 diphosphate. It participates in carotenoid biosynthesis; phytoene biosynthesis; all-trans-phytoene from geranylgeranyl diphosphate: step 1/1. Its function is as follows. Catalyzes the reaction from prephytoene diphosphate to phytoene. In Narcissus pseudonarcissus (Daffodil), this protein is Phytoene synthase, chloroplastic (PSY).